A 438-amino-acid chain; its full sequence is Aspartate--tRNA(Asp/Asn) ligase (438 aa).

E176 contributes to the L-aspartate binding site. Residues 198 to 201 (QLYK) are aspartate. R220 is an L-aspartate binding site. ATP-binding positions include 220–222 (RAE), 228–230 (RHL), and E361. Mg(2+)-binding residues include E361 and S364. Positions 364 and 368 each coordinate L-aspartate. ATP is bound at residue 409-412 (GADR).

It belongs to the class-II aminoacyl-tRNA synthetase family. Type 2 subfamily. In terms of assembly, homodimer. Mg(2+) is required as a cofactor.

It localises to the cytoplasm. The enzyme catalyses tRNA(Asx) + L-aspartate + ATP = L-aspartyl-tRNA(Asx) + AMP + diphosphate. Aspartyl-tRNA synthetase with relaxed tRNA specificity since it is able to aspartylate not only its cognate tRNA(Asp) but also tRNA(Asn). Reaction proceeds in two steps: L-aspartate is first activated by ATP to form Asp-AMP and then transferred to the acceptor end of tRNA(Asp/Asn). In Methanococcus maripaludis (strain C6 / ATCC BAA-1332), this protein is Aspartate--tRNA(Asp/Asn) ligase.